The chain runs to 715 residues: Methionine--tRNA ligase (715 aa).

A 'HIGH' region motif is present at residues 17–27; it reads PYANGPIHLGH. Cysteine 148, cysteine 151, cysteine 161, and cysteine 164 together coordinate Zn(2+). Positions 359–363 match the 'KMSKS' region motif; it reads KMSKS. Lysine 362 is an ATP binding site. The region spanning 614 to 715 is the tRNA-binding domain; it reads DLSKVELRVG…KDAKPGDRLK (102 aa).

It belongs to the class-I aminoacyl-tRNA synthetase family. MetG type 1 subfamily. As to quaternary structure, homodimer. Zn(2+) serves as cofactor.

The protein resides in the cytoplasm. The enzyme catalyses tRNA(Met) + L-methionine + ATP = L-methionyl-tRNA(Met) + AMP + diphosphate. Its function is as follows. Is required not only for elongation of protein synthesis but also for the initiation of all mRNA translation through initiator tRNA(fMet) aminoacylation. The sequence is that of Methionine--tRNA ligase from Leptospira interrogans serogroup Icterohaemorrhagiae serovar copenhageni (strain Fiocruz L1-130).